The primary structure comprises 359 residues: Molybdenum import ATP-binding protein ModC (359 aa).

An ABC transporter domain is found at 1–233 (MSGLTVSIRG…IDAESEGGGV (233 aa)). An ATP-binding site is contributed by 32–39 (GHSGAGKT). The Mop domain occupies 289–355 (AISIRNLLPV…VKAVSVDRAA (67 aa)).

This sequence belongs to the ABC transporter superfamily. Molybdate importer (TC 3.A.1.8) family. In terms of assembly, the complex is composed of two ATP-binding proteins (ModC), two transmembrane proteins (ModB) and a solute-binding protein (ModA).

It is found in the cell inner membrane. The catalysed reaction is molybdate(out) + ATP + H2O = molybdate(in) + ADP + phosphate + H(+). In terms of biological role, part of the ABC transporter complex ModABC involved in molybdenum import. Responsible for energy coupling to the transport system. In Brucella suis biovar 1 (strain 1330), this protein is Molybdenum import ATP-binding protein ModC.